A 481-amino-acid polypeptide reads, in one-letter code: Hyaluronidase-4 (481 aa).

Residues 1–8 (MKVLSEGQ) lie on the Cytoplasmic side of the membrane. Residues 9 to 29 (LKLCVVQPVHLTSWLLIFFIL) traverse the membrane as a helical segment. Residues 30 to 453 (KSISCLKPAR…ADCREIKTAD (424 aa)) are Extracellular-facing. Cystine bridges form between Cys-59–Cys-351, Cys-223–Cys-237, Cys-376–Cys-387, Cys-381–Cys-435, and Cys-437–Cys-446. Asn-86 and Asn-115 each carry an N-linked (GlcNAc...) asparagine glycan. Glu-147 serves as the catalytic Proton donor. N-linked (GlcNAc...) (complex) asparagine glycosylation occurs at Asn-177. Asn-343 carries N-linked (GlcNAc...) asparagine glycosylation. The helical transmembrane segment at 454-474 (GCSGVSPSPGSLMTLCLLLLA) threads the bilayer. Topologically, residues 475-481 (SYRSIQL) are cytoplasmic.

Belongs to the glycosyl hydrolase 56 family. As to expression, detected in placenta and skeletal muscle.

The protein resides in the membrane. It catalyses the reaction Random hydrolysis of (1-&gt;4)-linkages between N-acetyl-beta-D-glucosamine and D-glucuronate residues in hyaluronate.. Functionally, endo-hyaluronidase that degrades hyaluronan to smaller oligosaccharide fragments. Also has chondroitin sulfate hydrolase activity, The best substrate being the galactosaminidic linkage in the sequence of a trisulfated tetrasaccharide. This chain is Hyaluronidase-4 (HYAL4), found in Homo sapiens (Human).